The primary structure comprises 251 residues: Diphthine synthase (251 aa).

Residues D83, L86, 111 to 112, L163, and L205 contribute to the S-adenosyl-L-methionine site; that span reads SI.

This sequence belongs to the diphthine synthase family. In terms of assembly, homodimer.

It carries out the reaction 2-[(3S)-amino-3-carboxypropyl]-L-histidyl-[translation elongation factor 2] + 3 S-adenosyl-L-methionine = diphthine-[translation elongation factor 2] + 3 S-adenosyl-L-homocysteine + 3 H(+). The protein operates within protein modification; peptidyl-diphthamide biosynthesis. S-adenosyl-L-methionine-dependent methyltransferase that catalyzes the trimethylation of the amino group of the modified target histidine residue in translation elongation factor 2 (EF-2), to form an intermediate called diphthine. The three successive methylation reactions represent the second step of diphthamide biosynthesis. In Pyrobaculum calidifontis (strain DSM 21063 / JCM 11548 / VA1), this protein is Diphthine synthase.